The chain runs to 378 residues: Chaperone protein DnaJ (378 aa).

Residues 6-70 (DYYDVLGVSR…QKRQQYDQFG (65 aa)) form the J domain. A CR-type zinc finger spans residues 137-219 (GKTSEISYSR…CHGKGVKTQK (83 aa)). Zn(2+) is bound by residues C150, C153, C167, C170, C193, C196, C207, and C210. CXXCXGXG motif repeat units lie at residues 150–157 (CEVCKGSG), 167–174 (CDKCGGSG), 193–200 (CDKCAGSG), and 207–214 (CHNCHGKG).

This sequence belongs to the DnaJ family. Homodimer. Requires Zn(2+) as cofactor.

It is found in the cytoplasm. Its function is as follows. Participates actively in the response to hyperosmotic and heat shock by preventing the aggregation of stress-denatured proteins and by disaggregating proteins, also in an autonomous, DnaK-independent fashion. Unfolded proteins bind initially to DnaJ; upon interaction with the DnaJ-bound protein, DnaK hydrolyzes its bound ATP, resulting in the formation of a stable complex. GrpE releases ADP from DnaK; ATP binding to DnaK triggers the release of the substrate protein, thus completing the reaction cycle. Several rounds of ATP-dependent interactions between DnaJ, DnaK and GrpE are required for fully efficient folding. Also involved, together with DnaK and GrpE, in the DNA replication of plasmids through activation of initiation proteins. The chain is Chaperone protein DnaJ from Lactobacillus delbrueckii subsp. bulgaricus (strain ATCC BAA-365 / Lb-18).